Here is a 408-residue protein sequence, read N- to C-terminus: Putative mannan endo-1,4-beta-mannosidase 4 (408 aa).

An N-terminal signal peptide occupies residues 1-23 (MKCLCFIVLLAIVIAQSYVGVEA). A glycan (N-linked (GlcNAc...) asparagine) is linked at Asn73. The substrate site is built by Trp85 and Asn201. The active-site Proton donor is Glu202. Glu322 (nucleophile) is an active-site residue. Substrate is bound at residue Trp364.

It belongs to the glycosyl hydrolase 5 (cellulase A) family.

It localises to the secreted. It carries out the reaction Random hydrolysis of (1-&gt;4)-beta-D-mannosidic linkages in mannans, galactomannans and glucomannans.. The chain is Putative mannan endo-1,4-beta-mannosidase 4 (MAN4) from Arabidopsis thaliana (Mouse-ear cress).